Reading from the N-terminus, the 617-residue chain is Cell pattern formation-associated protein STUA (617 aa).

The tract at residues Met1–Leu79 is disordered. Residues Thr24–Ser34 are compositionally biased toward polar residues. Over residues Pro45–Tyr58 the composition is skewed to low complexity. Residues Gly61 to Gln76 show a composition bias toward polar residues. Residues Arg106–Pro212 enclose the HTH APSES-type domain. The segment at residues Gly140–Glu161 is a DNA-binding region (H-T-H motif). Disordered stretches follow at residues Ala223–Pro274, Ser300–Ala451, and Ala463–Arg617. Composition is skewed to low complexity over residues Gln305 to Ala318 and Pro334 to Thr345. Polar residues-rich tracts occupy residues Ile346–Asn361 and Pro368–Ser382. Basic and acidic residues predominate over residues Glu438–His447. The segment covering Pro488–Ala509 has biased composition (low complexity). Composition is skewed to polar residues over residues Gln519 to Arg533 and Ser553 to Asn563. The interval Lys569–Lys593 is nuclear localization domain. Residues Gln599–Arg617 are compositionally biased toward low complexity.

The protein belongs to the EFG1/PHD1/stuA family.

It is found in the nucleus. Its function is as follows. Transcription factor that regulates asexual reproduction. Binds the StuA-response elements (StRE) with the consensus sequence 5'-(A/T)CGCG(T/A)N(A/C)-3' at the promoters of target genes. Required for the formation of aerial hyphae, efficient conidiation, and the formation of perithecia. Essential for the generation of normal turgor pressure within the appressorium. Required for infection of intact apple fruit and penetration of onion epidermal cells. The sequence is that of Cell pattern formation-associated protein STUA from Colletotrichum gloeosporioides (Anthracnose fungus).